Here is a 438-residue protein sequence, read N- to C-terminus: GTPase Obg (438 aa).

Residues 2–160 form the Obg domain; it reads SMFLDQVTID…RKIELELKVL (159 aa). Residues 128–147 are disordered; the sequence is NIRFASPRNPAPEIAENGEP. The OBG-type G domain occupies 161–339; sequence ADVGLVGFPS…LLNATADLLE (179 aa). GTP contacts are provided by residues 167-174, 192-196, 214-217, 284-287, and 320-322; these read GFPSVGKS, FTTLV, DLPG, NKMD, and SGV. Mg(2+)-binding residues include serine 174 and threonine 194. The region spanning 360-438 is the OCT domain; sequence GFQPEGPEFT…IGNFEFEFVE (79 aa).

It belongs to the TRAFAC class OBG-HflX-like GTPase superfamily. OBG GTPase family. As to quaternary structure, monomer. It depends on Mg(2+) as a cofactor.

It localises to the cytoplasm. An essential GTPase which binds GTP, GDP and possibly (p)ppGpp with moderate affinity, with high nucleotide exchange rates and a fairly low GTP hydrolysis rate. Plays a role in control of the cell cycle, stress response, ribosome biogenesis and in those bacteria that undergo differentiation, in morphogenesis control. This is GTPase Obg from Enterococcus faecalis (strain ATCC 700802 / V583).